A 1054-amino-acid polypeptide reads, in one-letter code: MKQASAIPQPKTYGPLKNLPHLEKEQLSQSLWRIADELGPIFRFDFPGVSSVFVSGHNLVAEVCDEKRFDKNLGKGLQKVREFGGDGLFTSWTHEPNWQKAHRILLPSFSQKAMKGYHSMMLDIATQLIQKWSRLNPNEEIDVADDMTRLTLDTIGLCGFNYRFNSFYRDSQHPFITSMLRALKEAMNQSKRLGLQDKMMVKTKLQFQKDIEVMNSLVDRMIAERKANPDENIKDLLSLMLYAKDPVTGETLDDENIRYQIITFLIAGHETTSGLLSFAIYCLLTHPEKLKKAQEEADRVLTDDTPEYKQIQQLKYIRMVLNETLRLYPTAPAFSLYAKEDTVLGGEYPISKGQPVTVLIPKLHRDQNAWGPDAEDFRPERFEDPSSIPHHAYKPFGNGQRACIGMQFALQEATMVLGLVLKHFELINHTGYELKIKEALTIKPDDFKITVKPRKTAAINVQRKEQADIKAETKPKETKPKHGTPLLVLFGSNLGTAEGIAGELAAQGRQMGFTAETAPLDDYIGKLPEEGAVVIVTASYNGAPPDNAAGFVEWLKELEEGQLKGVSYAVFGCGNRSWASTYQRIPRLIDDMMKAKGASRLTAIGEGDAADDFESHRESWENRFWKETMDAFDINEIAQKEDRPSLSITFLSEATETPVAKAYGAFEGIVLENRELQTAASTRSTRHIELEIPAGKTYKEGDHIGILPKNSRELVQRVLSRFGLQSNHVIKVSGSAHMAHLPMDRPIKVVDLLSSYVELQEPASRLQLRELASYTVCPPHQKELEQLVSDDGIYKEQVLAKRLTMLDFLEDYPACEMPFERFLALLPSLKPRYYSISSSPKVHANIVSMTVGVVKASAWSGRGEYRGVASNYLAELNTGDAAACFIRTPQSGFQMPNDPETPMIMVGPGTGIAPFRGFIQARSVLKKEGSTLGEALLYFGCRRPDHDDLYREELDQAEQDGLVTIRRCYSRVENEPKGYVQHLLKQDTQKLMTLIEKGAHIYVCGDGSQMAPDVERTLRLAYEAEKAASQEESAVWLQKLQDQRRYVKDVWTGM.

Positions 1–475 (MKQASAIPQP…QADIKAETKP (475 aa)) are cytochrome P450. Residue Cys-403 coordinates heme. Positions 462 to 480 (QRKEQADIKAETKPKETKP) are enriched in basic and acidic residues. A disordered region spans residues 462 to 482 (QRKEQADIKAETKPKETKPKH). The NADPH--P450 reductase stretch occupies residues 476-1053 (KETKPKHGTP…RRYVKDVWTG (578 aa)). One can recognise a Flavodoxin-like domain in the interval 486–625 (LLVLFGSNLG…HRESWENRFW (140 aa)). FMN-binding positions include 492 to 497 (SNLGTA), 539 to 542 (SYNG), 573 to 575 (CGN), and 581 to 583 (TYQ). The FAD-binding FR-type domain occupies 663 to 896 (YGAFEGIVLE…RTPQSGFQMP (234 aa)).

This sequence in the N-terminal section; belongs to the cytochrome P450 family. Requires FAD as cofactor. It depends on FMN as a cofactor. Heme b serves as cofactor.

The protein resides in the cytoplasm. It catalyses the reaction an organic molecule + reduced [NADPH--hemoprotein reductase] + O2 = an alcohol + oxidized [NADPH--hemoprotein reductase] + H2O + H(+). The catalysed reaction is 2 oxidized [cytochrome P450] + NADPH = 2 reduced [cytochrome P450] + NADP(+) + H(+). Functions as a fatty acid monooxygenase. Catalyzes hydroxylation of a range of medium to long-chain fatty acids, with a preference for long-chain unsaturated and branched-chain fatty acids over saturated fatty acids. Hydroxylation of myristic acid occurs mainly at the omega-2 and omega-3 positions, in approximately equal proportions. Also displays a NADPH-dependent reductase activity in the C-terminal domain, which allows electron transfer from NADPH to the heme iron of the cytochrome P450 N-terminal domain. The chain is Bifunctional cytochrome P450/NADPH--P450 reductase 2 from Bacillus subtilis (strain 168).